We begin with the raw amino-acid sequence, 204 residues long: Glycerol-3-phosphate acyltransferase (204 aa).

Helical transmembrane passes span 8–28 (NAQF…LLLA), 76–96 (GVLV…LWGI), 122–142 (MGVM…VWAL), and 166–186 (FILH…VLLY).

It belongs to the PlsY family. Probably interacts with PlsX.

It is found in the cell inner membrane. The enzyme catalyses an acyl phosphate + sn-glycerol 3-phosphate = a 1-acyl-sn-glycero-3-phosphate + phosphate. Its pathway is lipid metabolism; phospholipid metabolism. Catalyzes the transfer of an acyl group from acyl-phosphate (acyl-PO(4)) to glycerol-3-phosphate (G3P) to form lysophosphatidic acid (LPA). This enzyme utilizes acyl-phosphate as fatty acyl donor, but not acyl-CoA or acyl-ACP. The chain is Glycerol-3-phosphate acyltransferase from Sulfurimonas denitrificans (strain ATCC 33889 / DSM 1251) (Thiomicrospira denitrificans (strain ATCC 33889 / DSM 1251)).